The primary structure comprises 231 residues: Orotidine 5'-phosphate decarboxylase (231 aa).

Residues Asp11, Lys33, 60–69, Thr120, Arg181, Gln190, Gly210, and Arg211 each bind substrate; that span reads DLKFHDIPNT. The active-site Proton donor is Lys62.

The protein belongs to the OMP decarboxylase family. Type 1 subfamily. In terms of assembly, homodimer.

It catalyses the reaction orotidine 5'-phosphate + H(+) = UMP + CO2. It participates in pyrimidine metabolism; UMP biosynthesis via de novo pathway; UMP from orotate: step 2/2. Catalyzes the decarboxylation of orotidine 5'-monophosphate (OMP) to uridine 5'-monophosphate (UMP). In Photobacterium profundum (strain SS9), this protein is Orotidine 5'-phosphate decarboxylase.